Consider the following 339-residue polypeptide: Nicotinate-nucleotide--dimethylbenzimidazole phosphoribosyltransferase (339 aa).

Glutamate 306 serves as the catalytic Proton acceptor.

The protein belongs to the CobT family.

The enzyme catalyses 5,6-dimethylbenzimidazole + nicotinate beta-D-ribonucleotide = alpha-ribazole 5'-phosphate + nicotinate + H(+). Its pathway is nucleoside biosynthesis; alpha-ribazole biosynthesis; alpha-ribazole from 5,6-dimethylbenzimidazole: step 1/2. Catalyzes the synthesis of alpha-ribazole-5'-phosphate from nicotinate mononucleotide (NAMN) and 5,6-dimethylbenzimidazole (DMB). This chain is Nicotinate-nucleotide--dimethylbenzimidazole phosphoribosyltransferase, found in Brucella melitensis biotype 2 (strain ATCC 23457).